The chain runs to 463 residues: Type I restriction enzyme StySPI specificity subunit (463 aa).

The protein belongs to the type-I restriction system S methylase family. As to quaternary structure, the type I restriction/modification system is composed of three polypeptides R, M and S; the restriction enzyme has stoichiometry R(2)M(2)S(1) while the methyltransferase is M(2)S(1).

In terms of biological role, the specificity (S) subunit of a type I restriction enzyme; this subunit dictates DNA sequence specificity. The M and S subunits together form a methyltransferase (MTase) that methylates A-2 on the top strand and A-3 on the bottom strand of the sequence 5'-AACN(6)GTRC-3'. In the presence of the R subunit the complex can also act as an endonuclease, binding to the same target sequence but cutting the DNA some distance from this site. Whether the DNA is cut or modified depends on the methylation state of the target sequence. When the target site is unmodified, the DNA is cut. When the target site is hemimethylated, the complex acts as a maintenance MTase modifying the DNA so that both strands become methylated. After locating a non-methylated recognition site, the enzyme complex serves as a molecular motor that translocates DNA in an ATP-dependent manner until a collision occurs that triggers cleavage. The chain is Type I restriction enzyme StySPI specificity subunit from Salmonella potsdam.